A 597-amino-acid chain; its full sequence is Electron transfer flavoprotein-ubiquinone oxidoreductase, mitochondrial (597 aa).

53-67 is a binding site for FAD; sequence VVIVGGGPSGLSAAI. An intramembrane segment occupies 91–112; sequence IGGHTLSGAVIETRALDELIPN. Residues Gly-285 and Gly-286 each contribute to the a ubiquinone site. Residues 409 to 426 lie within the membrane without spanning it; sequence IDPATYDKNIRDTYVVKE. 4 residues coordinate [4Fe-4S] cluster: Cys-540, Cys-566, Cys-569, and Cys-572. The 30-residue stretch at 557 to 586 folds into the 4Fe-4S ferredoxin-type domain; sequence KRLQINAQNCIHCKTCDIKDPQQNINWVTP.

It belongs to the ETF-QO/FixC family. Monomer. [4Fe-4S] cluster serves as cofactor. The cofactor is FAD.

The protein localises to the mitochondrion inner membrane. The catalysed reaction is a ubiquinone + reduced [electron-transfer flavoprotein] = a ubiquinol + oxidized [electron-transfer flavoprotein] + H(+). Functionally, accepts electrons from ETF and reduces ubiquinone. The chain is Electron transfer flavoprotein-ubiquinone oxidoreductase, mitochondrial (let-721) from Caenorhabditis elegans.